Consider the following 344-residue polypeptide: Methionine import ATP-binding protein MetN (344 aa).

The ABC transporter domain occupies 2-241 (IEIKSVNKVF…PKTELAHQFI (240 aa)). 38–45 (GSSGAGKS) is a binding site for ATP.

Belongs to the ABC transporter superfamily. Methionine importer (TC 3.A.1.24) family. As to quaternary structure, the complex is composed of two ATP-binding proteins (MetN), two transmembrane proteins (MetI) and a solute-binding protein (MetQ).

It is found in the cell inner membrane. The enzyme catalyses L-methionine(out) + ATP + H2O = L-methionine(in) + ADP + phosphate + H(+). It carries out the reaction D-methionine(out) + ATP + H2O = D-methionine(in) + ADP + phosphate + H(+). In terms of biological role, part of the ABC transporter complex MetNIQ involved in methionine import. Responsible for energy coupling to the transport system. The sequence is that of Methionine import ATP-binding protein MetN from Vibrio cholerae serotype O1 (strain ATCC 39315 / El Tor Inaba N16961).